A 359-amino-acid polypeptide reads, in one-letter code: Hsp70-binding protein 1 (359 aa).

The interval 1–71 is disordered; it reads MSDEGSRGSR…PPPEPMSEER (71 aa). Residues 23 to 37 are compositionally biased toward gly residues; the sequence is SSGGGGGGSSAGGSG. ARM repeat units lie at residues 132–174, 177–217, 220–259, and 262–301; these read ENMD…TCSQ, AAIQ…CLVR, EAGLLQFLRLDGFSVLMRAMQQQVQKLKVKSAFLLQNLLV, and PEHKGTLCSMGMVQQLVALVRTEHSPFHEHVLGALCSLVT. Residues Ser351 and Ser356 each carry the phosphoserine modification.

Interacts with the ATP-binding domain of HSPA1A. Detected in a ternary complex containing STUB1, HSPA1A and HSPBP1. Interacts with PGLYRP1; this interaction blocks the cytotoxic activity of the PGLYRP1-HSPA1A complex. In terms of tissue distribution, ubiquitous.

Functionally, inhibits HSPA1A chaperone activity by changing the conformation of the ATP-binding domain of HSPA1A and interfering with ATP binding. Interferes with ubiquitination mediated by STUB1 and inhibits chaperone-assisted degradation of immature CFTR. This Homo sapiens (Human) protein is Hsp70-binding protein 1.